A 468-amino-acid chain; its full sequence is Secreted triacylglycerol lipase LIP2 (468 aa).

An N-terminal signal peptide occupies residues Met-1 to Ala-22. Cys-125 and Cys-295 are disulfide-bonded. The active-site Nucleophile is Ser-209. N-linked (GlcNAc...) asparagine glycosylation is found at Asn-242, Asn-252, and Asn-279. Catalysis depends on residues Asp-355 and His-389.

It belongs to the AB hydrolase superfamily. Lipase family. Class Lip subfamily.

Its subcellular location is the secreted. The enzyme catalyses a triacylglycerol + H2O = a diacylglycerol + a fatty acid + H(+). It carries out the reaction a monoacylglycerol + H2O = glycerol + a fatty acid + H(+). The catalysed reaction is a diacylglycerol + H2O = a monoacylglycerol + a fatty acid + H(+). Secreted lipase that hydrolyzes acylglycerol lipids such as triacylglycerols and consequently releases free fatty acid. Due to an absence of fatty acid synthase genes in Malassezia species, secretory lipases are essential for the yeast to generate free fatty acids from degradation of sebum and assimilate them as lipid sources for growth. Plays important roles not only in lipid metabolism but also in the immune response of host cells and pathogenesis. This is Secreted triacylglycerol lipase LIP2 from Malassezia furfur (Pityriasis versicolor infection agent).